The following is a 394-amino-acid chain: uncharacterized protein (394 aa).

This is an uncharacterized protein from Bacillus subtilis (strain 168).